The following is a 464-amino-acid chain: Protein FAM90A14 (464 aa).

Disordered regions lie at residues 1-42, 70-389, and 411-437; these read MMAR…DPRL, PATL…HDGA, and APSF…SEAP. Composition is skewed to basic and acidic residues over residues 74–89 and 97–114; these read GKKE…KPRV and NKDK…DPQR. A compositionally biased stretch (low complexity) spans 180-197; the sequence is LASLSPLRKASLSSSSSL.

It belongs to the FAM90 family.

The chain is Protein FAM90A14 from Homo sapiens (Human).